The primary structure comprises 292 residues: Elongation factor Ts (292 aa).

The interval 81-84 (TDFV) is involved in Mg(2+) ion dislocation from EF-Tu.

This sequence belongs to the EF-Ts family.

Its subcellular location is the cytoplasm. In terms of biological role, associates with the EF-Tu.GDP complex and induces the exchange of GDP to GTP. It remains bound to the aminoacyl-tRNA.EF-Tu.GTP complex up to the GTP hydrolysis stage on the ribosome. The protein is Elongation factor Ts of Acidithiobacillus ferrooxidans (strain ATCC 23270 / DSM 14882 / CIP 104768 / NCIMB 8455) (Ferrobacillus ferrooxidans (strain ATCC 23270)).